The chain runs to 160 residues: Thioredoxin-like protein 4A homolog (160 aa).

The disordered stretch occupies residues 132–160 (KFLKKKKKKKNKKKQKKKIKKIKKKIKNN). Residues 133-160 (FLKKKKKKKNKKKQKKKIKKIKKKIKNN) are compositionally biased toward basic residues.

It belongs to the DIM1 family. In terms of assembly, component of the precatalytic spliceosome (spliceosome B complex). Component of the U5 snRNP complex. Component of the U4/U6-U5 tri-snRNP complex.

The protein resides in the nucleus. In terms of biological role, plays a role in pre-mRNA splicing as component of the U5 snRNP and U4/U6-U5 tri-snRNP complexes that are involved in spliceosome assembly, and as component of the precatalytic spliceosome (spliceosome B complex). The polypeptide is Thioredoxin-like protein 4A homolog (txnl4a) (Dictyostelium discoideum (Social amoeba)).